A 124-amino-acid polypeptide reads, in one-letter code: Small ribosomal subunit protein uS12 (124 aa).

A 3-methylthioaspartic acid modification is found at aspartate 89.

This sequence belongs to the universal ribosomal protein uS12 family. Part of the 30S ribosomal subunit. Contacts proteins S8 and S17. May interact with IF1 in the 30S initiation complex.

Its function is as follows. With S4 and S5 plays an important role in translational accuracy. In terms of biological role, interacts with and stabilizes bases of the 16S rRNA that are involved in tRNA selection in the A site and with the mRNA backbone. Located at the interface of the 30S and 50S subunits, it traverses the body of the 30S subunit contacting proteins on the other side and probably holding the rRNA structure together. The combined cluster of proteins S8, S12 and S17 appears to hold together the shoulder and platform of the 30S subunit. The polypeptide is Small ribosomal subunit protein uS12 (Histophilus somni (strain 129Pt) (Haemophilus somnus)).